Reading from the N-terminus, the 138-residue chain is Acidic phospholipase A2 VpaPLA2 (138 aa).

The first 16 residues, 1 to 16 (MRTLWIVAVCLMGVEG), serve as a signal peptide directing secretion. 7 cysteine pairs are disulfide-bonded: Cys-42/Cys-131, Cys-44/Cys-60, Cys-59/Cys-111, Cys-65/Cys-138, Cys-66/Cys-104, Cys-73/Cys-97, and Cys-91/Cys-102. Positions 43, 45, and 47 each coordinate Ca(2+). Residue His-63 is part of the active site. Position 64 (Asp-64) interacts with Ca(2+). The active site involves Asp-105.

It belongs to the phospholipase A2 family. Group II subfamily. D49 sub-subfamily. Ca(2+) serves as cofactor. Expressed by the venom gland.

It localises to the secreted. It carries out the reaction a 1,2-diacyl-sn-glycero-3-phosphocholine + H2O = a 1-acyl-sn-glycero-3-phosphocholine + a fatty acid + H(+). Its function is as follows. Snake venom phospholipase A2 (PLA2) that causes a sudden decrease of arterial blood pressure when injected into rat, but is not lethal. When co-injected with an uncharacterized basic protein (which did not show any enzymatic activity, but also causes a drop in blood pressure), this synergistical mixture is lethal. PLA2 catalyzes the calcium-dependent hydrolysis of the 2-acyl groups in 3-sn-phosphoglycerides. The protein is Acidic phospholipase A2 VpaPLA2 of Daboia palaestinae (Palestine viper).